A 108-amino-acid chain; its full sequence is UPF0145 protein Acel_2109 (108 aa).

The protein belongs to the UPF0145 family.

This chain is UPF0145 protein Acel_2109, found in Acidothermus cellulolyticus (strain ATCC 43068 / DSM 8971 / 11B).